A 1063-amino-acid polypeptide reads, in one-letter code: Structural polyprotein (1063 aa).

The disordered stretch occupies residues 1-131 (MASTTPITME…LGPPTNPFQA (131 aa)). The tract at residues 30–69 (GASQSRRPRPPRQRDSSTTGDDSGRDSGGPRRRRGNRGRG) is human C1QBP/SF2P32-binding. Residue serine 46 is modified to Phosphoserine; by host. Positions 59 to 69 (PRRRRGNRGRG) are enriched in basic residues. Positions 70–87 (QRRDWSRAPPPPEERQET) are enriched in basic and acidic residues. Over residues 93-107 (APKPSRAPPQQPQPP) the composition is skewed to pro residues. Cysteine 153 and cysteine 197 are disulfide-bonded. The segment at 279-300 (GAPQAFLAGLLLAAVAVGTARA) is functions as E2 signal peptide. Over 301 to 534 (GLQPRADMAA…LWLATANALS (234 aa)) the chain is Extracellular. Asparagine 353, asparagine 371, asparagine 410, and asparagine 429 each carry an N-linked (GlcNAc...) asparagine; by host glycan. A helical transmembrane segment spans residues 535-555 (LDHALAAFVLLVPWVLIFMVC). Residues 556–582 (RRTCRRRGAAAALTAVVLQGYNPPAYG) are Cytoplasmic-facing. The segment at 563 to 582 (GAAAALTAVVLQGYNPPAYG) is functions as E1 signal peptide. The Extracellular portion of the chain corresponds to 583–1028 (EEAFTYLCTA…QTWAEWAAAH (446 aa)). Intrachain disulfides connect cysteine 590–cysteine 595, cysteine 619–cysteine 824, cysteine 641–cysteine 653, cysteine 699–cysteine 712, cysteine 758–cysteine 767, cysteine 807–cysteine 817, cysteine 931–cysteine 934, and cysteine 950–cysteine 983. Asparagine 658 carries an N-linked (GlcNAc...) asparagine; by host glycan. Positions 670 and 671 each coordinate Ca(2+). Residues aspartate 718 and threonine 719 each coordinate Ca(2+). N-linked (GlcNAc...) asparagine; by host glycosylation is found at asparagine 759 and asparagine 791. O-linked (GalNAc...) threonine; by host glycosylation is found at threonine 1011 and threonine 1012. The chain crosses the membrane as a helical span at residues 1029–1049 (WWQLTLGAICALLLAGLLACC). Residues 1050–1063 (AKCLYYLRGAIAPR) are Extracellular-facing.

In terms of assembly, homodimer; further assembles into homooligomer. Interacts with human C1QBP. Interacts (via N-terminus) with protease/methyltransferase p150. As to quaternary structure, heterodimer with spike glycoprotein E2. Heterodimer with spike glycoprotein E1. Post-translationally, structural polyprotein: Specific enzymatic cleavages in vivo yield mature proteins. Two signal peptidase-mediated cleavages within the polyprotein produce the structural proteins capsid, E2, and E1. The E2 signal peptide remains attached to the C-terminus of the capsid protein after cleavage by the signal peptidase. Another signal peptide at E2 C-terminus directs E1 to the ER, with a similar mechanism. Contains three N-linked oligosaccharides. In terms of processing, capsid is phosphorylated on Ser-46 by host. This phosphorylation negatively regulates capsid protein RNA-binding activity. Dephosphorylated by human PP1A.

Its subcellular location is the virion. The protein resides in the host cytoplasm. The protein localises to the host mitochondrion. It is found in the virion membrane. It localises to the host Golgi apparatus membrane. Its function is as follows. Capsid protein interacts with genomic RNA and assembles into icosahedric core particles 65-70 nm in diameter. The resulting nucleocapsid eventually associates with the cytoplasmic domain of E2 at the cell membrane, leading to budding and formation of mature virions from host Golgi membranes. Phosphorylation negatively regulates RNA-binding activity, possibly delaying virion assembly during the viral replication phase. Capsid protein dimerizes and becomes disulfide-linked in the virion. Modulates genomic RNA replication. Modulates subgenomic RNA synthesis by interacting with human C1QBP/SF2P32. Induces both perinuclear clustering of mitochondria and the formation of electron-dense intermitochondrial plaques, both hallmarks of rubella virus infected cells. Induces apoptosis when expressed in transfected cells. In terms of biological role, responsible for viral attachment to target host cell, by binding to the cell receptor. Its transport to the plasma membrane depends on interaction with E1 protein. The surface glycoproteins display an irregular helical organization and a pseudo-tetrameric inner nucleocapsid arrangement. Functionally, class II viral fusion protein. Fusion activity is inactive as long as E1 is bound to E2 in mature virion. After virus attachment to target cell and clathrin-mediated endocytosis, acidification of the endosome would induce dissociation of E1/E2 heterodimer and concomitant trimerization of the E1 subunits. This E1 homotrimer is fusion active, and promotes release of viral nucleocapsid in cytoplasm after endosome and viral membrane fusion. The cytoplasmic tail of spike glycoprotein E1 modulates virus release. The surface glycoproteins display an irregular helical organization and a pseudo-tetrameric inner nucleocapsid arrangement. This Homo sapiens (Human) protein is Structural polyprotein.